The sequence spans 330 residues: Probable pectinesterase 55 (330 aa).

A signal peptide spans 1 to 24 (MGTHRIILGLAALCCFCLPHLIEA). Asparagine 38 and asparagine 52 each carry an N-linked (GlcNAc...) asparagine glycan. Catalysis depends on aspartate 161, which acts as the Proton donor. The active-site Nucleophile is aspartate 182. Substrate-binding residues include arginine 243 and tryptophan 245. 2 N-linked (GlcNAc...) asparagine glycosylation sites follow: asparagine 257 and asparagine 292.

This sequence belongs to the pectinesterase family.

It localises to the secreted. It is found in the cell wall. It catalyses the reaction [(1-&gt;4)-alpha-D-galacturonosyl methyl ester](n) + n H2O = [(1-&gt;4)-alpha-D-galacturonosyl](n) + n methanol + n H(+). It functions in the pathway glycan metabolism; pectin degradation; 2-dehydro-3-deoxy-D-gluconate from pectin: step 1/5. Functionally, acts in the modification of cell walls via demethylesterification of cell wall pectin. In Arabidopsis thaliana (Mouse-ear cress), this protein is Probable pectinesterase 55 (PME55).